We begin with the raw amino-acid sequence, 294 residues long: N-acetylmuramic acid 6-phosphate etherase (294 aa).

An SIS domain is found at 54–217 (VIKSFEEEGR…STASMIGVGK (164 aa)). Glutamate 82 (proton donor) is an active-site residue. Residue glutamate 113 is part of the active site.

The protein belongs to the GCKR-like family. MurNAc-6-P etherase subfamily. In terms of assembly, homodimer.

It carries out the reaction N-acetyl-D-muramate 6-phosphate + H2O = N-acetyl-D-glucosamine 6-phosphate + (R)-lactate. It functions in the pathway amino-sugar metabolism; N-acetylmuramate degradation. Specifically catalyzes the cleavage of the D-lactyl ether substituent of MurNAc 6-phosphate, producing GlcNAc 6-phosphate and D-lactate. The chain is N-acetylmuramic acid 6-phosphate etherase from Bacillus cereus (strain B4264).